A 74-amino-acid chain; its full sequence is UPF0270 protein NT01EI_3666 (74 aa).

This sequence belongs to the UPF0270 family.

This chain is UPF0270 protein NT01EI_3666, found in Edwardsiella ictaluri (strain 93-146).